Here is a 271-residue protein sequence, read N- to C-terminus: Low choriolytic enzyme (271 aa).

An N-terminal signal peptide occupies residues Met1–Ala20. A propeptide spans Gln21–Arg71 (activation peptide). 2 N-linked (GlcNAc...) asparagine glycosylation sites follow: Asn30 and Asn54. The Peptidase M12A domain maps to Asn72–Cys271. Disulfide bonds link Cys76/Cys83, Cys123/Cys271, and Cys144/Cys164. His172 is a binding site for Zn(2+). Residue Glu173 is part of the active site. Positions 176 and 182 each coordinate Zn(2+). N-linked (GlcNAc...) asparagine glycosylation occurs at Asn211.

Requires Zn(2+) as cofactor.

The protein resides in the zymogen granule. It catalyses the reaction Hydrolysis of the inner layer of fish egg envelope. Also hydrolysis of casein and small molecule substrates such as succinyl-Leu-Leu-Val-Tyr-|-7-(4-methyl)coumarylamide.. Its function is as follows. Participates in the breakdown of the egg envelope, which is derived from the egg extracellular matrix, at the time of hatching. Thus allowing the newly hatched fish to swim free. LCE solubilizes the egg envelope only after it has been swollen by the action of HCE. The polypeptide is Low choriolytic enzyme (lce) (Oryzias latipes (Japanese rice fish)).